The primary structure comprises 95 residues: DNA-directed RNA polymerase subunit Rpo11 (95 aa).

It belongs to the archaeal Rpo11/eukaryotic RPB11/RPC19 RNA polymerase subunit family. Part of the RNA polymerase complex.

It localises to the cytoplasm. It catalyses the reaction RNA(n) + a ribonucleoside 5'-triphosphate = RNA(n+1) + diphosphate. Its function is as follows. DNA-dependent RNA polymerase (RNAP) catalyzes the transcription of DNA into RNA using the four ribonucleoside triphosphates as substrates. The chain is DNA-directed RNA polymerase subunit Rpo11 from Methanococcus vannielii (strain ATCC 35089 / DSM 1224 / JCM 13029 / OCM 148 / SB).